The chain runs to 404 residues: MKKIYDLWVRVSLIKKIGIGVVIGVMLGILAPDLTGFSILGKLFVGGLKAIAPLLVFALVSQAISHQKKGRQTNMTLIIFLYLFGTFASALVAVLTAYLFPLTLVLNTPVNTELSPPQGVAEVFQSLLLKLVDNPINALATANYIGVLSWAIIFGLALKAASQETKHLIKTAAEVTSQIVVWIINLAPIGIMSLVFTTISENGVGILSDYAFLILVLVGTMVFVALVVNPLIAVLITRQNPYPLVLRCLRESGLTAFFTRSSAANIPVNMQLCQKIGLSKDTYSVSIPLGATINMGGAAITINVLTLAAVHTFGIPIDFLTALLLSVVAAVSACGASGVAGGSLLLIPVACSLFGISNDLAMQVVGVGFIVGVIQDSCETALNSSTDVLFTAIAENAFWKRKKA.

The next 8 membrane-spanning stretches (helical) occupy residues 17–37, 39–59, 75–95, 138–158, 179–199, 212–232, 287–307, and 313–333; these read IGIGVVIGVMLGILAPDLTGF, ILGKLFVGGLKAIAPLLVFAL, MTLIIFLYLFGTFASALVAVL, ALATANYIGVLSWAIIFGLAL, IVVWIINLAPIGIMSLVFTTI, FLILVLVGTMVFVALVVNPLI, IPLGATINMGGAAITINVLTL, and FGIPIDFLTALLLSVVAAVSA.

This sequence belongs to the dicarboxylate/amino acid:cation symporter (DAACS) (TC 2.A.23) family.

The protein resides in the cell membrane. The catalysed reaction is L-serine(in) + Na(+)(in) = L-serine(out) + Na(+)(out). It catalyses the reaction L-threonine(in) + Na(+)(in) = L-threonine(out) + Na(+)(out). Its function is as follows. Involved in the import of serine and threonine into the cell, with the concomitant import of sodium (symport system). In Streptococcus pyogenes serotype M5 (strain Manfredo), this protein is Serine/threonine transporter SstT.